Here is a 70-residue protein sequence, read N- to C-terminus: DNA gyrase inhibitor YacG (70 aa).

Zn(2+) is bound by residues Cys-7, Cys-10, Cys-26, and Cys-30.

This sequence belongs to the DNA gyrase inhibitor YacG family. Interacts with GyrB. It depends on Zn(2+) as a cofactor.

In terms of biological role, inhibits all the catalytic activities of DNA gyrase by preventing its interaction with DNA. Acts by binding directly to the C-terminal domain of GyrB, which probably disrupts DNA binding by the gyrase. This chain is DNA gyrase inhibitor YacG, found in Shewanella sediminis (strain HAW-EB3).